We begin with the raw amino-acid sequence, 64 residues long: UPF0434 protein MADE_1009415 (64 aa).

It belongs to the UPF0434 family.

This chain is UPF0434 protein MADE_1009415, found in Alteromonas mediterranea (strain DSM 17117 / CIP 110805 / LMG 28347 / Deep ecotype).